A 293-amino-acid chain; its full sequence is tRNA pseudouridine synthase B (293 aa).

The active-site Nucleophile is the aspartate 39.

This sequence belongs to the pseudouridine synthase TruB family. Type 1 subfamily.

The enzyme catalyses uridine(55) in tRNA = pseudouridine(55) in tRNA. Functionally, responsible for synthesis of pseudouridine from uracil-55 in the psi GC loop of transfer RNAs. The polypeptide is tRNA pseudouridine synthase B (Thermobifida fusca (strain YX)).